A 631-amino-acid polypeptide reads, in one-letter code: Phosphomethylpyrimidine synthase (631 aa).

Residues N239, M268, Y297, H333, 353–355, 394–397, and E433 contribute to the substrate site; these read SRG and DGLR. Zn(2+) is bound at residue H437. Substrate is bound at residue Y460. H501 is a Zn(2+) binding site. Residues C581, C584, and C589 each coordinate [4Fe-4S] cluster.

This sequence belongs to the ThiC family. As to quaternary structure, homodimer. [4Fe-4S] cluster is required as a cofactor.

The enzyme catalyses 5-amino-1-(5-phospho-beta-D-ribosyl)imidazole + S-adenosyl-L-methionine = 4-amino-2-methyl-5-(phosphooxymethyl)pyrimidine + CO + 5'-deoxyadenosine + formate + L-methionine + 3 H(+). Its pathway is cofactor biosynthesis; thiamine diphosphate biosynthesis. Functionally, catalyzes the synthesis of the hydroxymethylpyrimidine phosphate (HMP-P) moiety of thiamine from aminoimidazole ribotide (AIR) in a radical S-adenosyl-L-methionine (SAM)-dependent reaction. The sequence is that of Phosphomethylpyrimidine synthase from Salmonella heidelberg (strain SL476).